Reading from the N-terminus, the 562-residue chain is Transmembrane E3 ubiquitin-protein ligase FLY1 (562 aa).

The N-terminal stretch at 1–32 (MKKREHLGLGFFEWQIILWLSIWLAISQQALG) is a signal peptide. At 33–262 (LRPIREKPRS…TSVNVEVYYN (230 aa)) the chain is on the lumenal side. Residues 263–283 (KAVNYTLMVTFVSFLQVLLLI) traverse the membrane as a helical segment. Topologically, residues 284-297 (RQMEHGNTQSGAAK) are cytoplasmic. Residues 298-318 (VSIVMIGQQAIMDAYLCLLHL) form a helical membrane-spanning segment. Over 319–321 (TAG) the chain is Lumenal. The helical transmembrane segment at 322–342 (ILVESLFNAFATAAFFKFVVF) threads the bilayer. The Cytoplasmic portion of the chain corresponds to 343–373 (SIFEMRYLLAIWKATRPSNSGEGWETMRREL). A helical membrane pass occupies residues 374 to 394 (SFLYSRFYGILLGGILIMYQF). Residues 395–397 (HNY) lie on the Lumenal side of the membrane. Residues 398-418 (MQPILLLMYSFWIPQIVANVV) form a helical membrane-spanning segment. Residues 419–426 (RDSRKPLH) lie on the Cytoplasmic side of the membrane. A helical transmembrane segment spans residues 427 to 447 (PYYILGMTATRLAIPLYVFGC). At 448-458 (PHNFMRVEPNK) the chain is on the lumenal side. The chain crosses the membrane as a helical span at residues 459 to 479 (VWCICLCTFMGLQAVILLLQH). At 480–562 (YFGSRCFVPR…PTCRRSLPPA (83 aa)) the chain is on the cytoplasmic side. Residues 512 to 556 (CVICMTAIDLRQHTSDCMVTPCEHFFHSGCLQRWMDIKMECPTCR) form an RING-type; atypical zinc finger.

As to expression, highly expressed in stems. Expressed in root xylem and seed coat.

The protein localises to the endomembrane system. It carries out the reaction S-ubiquitinyl-[E2 ubiquitin-conjugating enzyme]-L-cysteine + [acceptor protein]-L-lysine = [E2 ubiquitin-conjugating enzyme]-L-cysteine + N(6)-ubiquitinyl-[acceptor protein]-L-lysine.. It participates in protein modification; protein ubiquitination. Functionally, E3 ubiquitin-protein ligase that regulates the degree of methylesterification of pectin in seed mucilage. May be involved in the recycling of pectin methylesterase enzymes in the endomembrane system of seed coat epidermal cells. Possesses E3 ubiquitin-protein ligase activity in vitro when associated with the E1 enzyme UBA1 and the E2 enzyme UBC8. May be involved in xylem development. The protein is Transmembrane E3 ubiquitin-protein ligase FLY1 of Arabidopsis thaliana (Mouse-ear cress).